Reading from the N-terminus, the 634-residue chain is Chaperone protein HtpG (634 aa).

The segment at 1 to 339 (MAQETMSFQA…SADLPLNVSR (339 aa)) is a; substrate-binding. Residues 340–559 (EILQESRDVK…DGEMSGYLQR (220 aa)) form a b region. Positions 560-634 (MLKAAGQQAP…ALLLARANEA (75 aa)) are c.

The protein belongs to the heat shock protein 90 family. In terms of assembly, homodimer.

It is found in the cytoplasm. In terms of biological role, molecular chaperone. Has ATPase activity. In Paraburkholderia xenovorans (strain LB400), this protein is Chaperone protein HtpG.